The sequence spans 161 residues: NADH-quinone oxidoreductase subunit I (161 aa).

2 consecutive 4Fe-4S ferredoxin-type domains span residues 53–82 (RRYPSGEERCIACKLCEAICPAQAITIEAE) and 92–121 (TRYDIDMVKCIYCGFCQEACPVDAIVEGPN). Residues Cys62, Cys65, Cys68, Cys72, Cys101, Cys104, Cys107, and Cys111 each coordinate [4Fe-4S] cluster.

Belongs to the complex I 23 kDa subunit family. NDH-1 is composed of 14 different subunits. Subunits NuoA, H, J, K, L, M, N constitute the membrane sector of the complex. The cofactor is [4Fe-4S] cluster.

It localises to the cell inner membrane. It carries out the reaction a quinone + NADH + 5 H(+)(in) = a quinol + NAD(+) + 4 H(+)(out). Functionally, NDH-1 shuttles electrons from NADH, via FMN and iron-sulfur (Fe-S) centers, to quinones in the respiratory chain. The immediate electron acceptor for the enzyme in this species is believed to be ubiquinone. Couples the redox reaction to proton translocation (for every two electrons transferred, four hydrogen ions are translocated across the cytoplasmic membrane), and thus conserves the redox energy in a proton gradient. This is NADH-quinone oxidoreductase subunit I from Hyphomonas neptunium (strain ATCC 15444).